The chain runs to 702 residues: NAD(P)H-quinone oxidoreductase subunit 5, chloroplastic (702 aa).

Helical transmembrane passes span 1-21 (WVIP…LFFI), 31-51 (IWAF…VHLS), 81-101 (IDPL…LVLI), 117-137 (FVYI…SNLI), 139-159 (IYFF…FWFT), 177-197 (GDFG…SLEF), 211-231 (NGIN…GAVA), 250-270 (TPIS…FLLA), 272-292 (LFPL…VGTI), 319-339 (LGYM…FHLI), 346-366 (ALLF…VGYS), 388-408 (TTFL…CFWS), 417-437 (WLYS…TAFY), 534-554 (LFPL…GISF), and 602-622 (SLAI…YSFF).

The protein belongs to the complex I subunit 5 family. As to quaternary structure, NDH is composed of at least 16 different subunits, 5 of which are encoded in the nucleus.

The protein resides in the plastid. Its subcellular location is the chloroplast thylakoid membrane. It carries out the reaction a plastoquinone + NADH + (n+1) H(+)(in) = a plastoquinol + NAD(+) + n H(+)(out). It catalyses the reaction a plastoquinone + NADPH + (n+1) H(+)(in) = a plastoquinol + NADP(+) + n H(+)(out). In terms of biological role, NDH shuttles electrons from NAD(P)H:plastoquinone, via FMN and iron-sulfur (Fe-S) centers, to quinones in the photosynthetic chain and possibly in a chloroplast respiratory chain. The immediate electron acceptor for the enzyme in this species is believed to be plastoquinone. Couples the redox reaction to proton translocation, and thus conserves the redox energy in a proton gradient. The chain is NAD(P)H-quinone oxidoreductase subunit 5, chloroplastic (ndhF) from Poa pratensis (Kentucky bluegrass).